The primary structure comprises 410 residues: Serine proteinase inhibitor A3K (410 aa).

A signal peptide spans 1–24 (MPSAISRGLLLLAGLCYLVFGIMA). Residues Asn-62, Asn-99, Asn-162, Asn-229, and Asn-263 are each glycosylated (N-linked (GlcNAc...) asparagine). The RCL stretch occupies residues 360-381 (GTEAAAATVLEATRTARPPRLS).

Belongs to the serpin family.

It is found in the secreted. Its subcellular location is the extracellular space. In terms of biological role, contrapsin inhibits trypsin-like proteases. This is Serine proteinase inhibitor A3K (SERPINA3K) from Cavia porcellus (Guinea pig).